The following is a 136-amino-acid chain: Small ribosomal subunit protein uS9 (136 aa).

Belongs to the universal ribosomal protein uS9 family.

The sequence is that of Small ribosomal subunit protein uS9 from Borrelia hermsii (strain HS1 / DAH).